Reading from the N-terminus, the 282-residue chain is Acetyl-coenzyme A carboxylase carboxyl transferase subunit beta 1 (282 aa).

Residues 23-282 (LMTKCPECRH…MHTKGGVQHV (260 aa)) form the CoA carboxyltransferase N-terminal domain. C27, C30, C46, and C49 together coordinate Zn(2+). The segment at 27-49 (CPECRHILLTKELEKNHKVCTKC) adopts a C4-type zinc-finger fold.

This sequence belongs to the AccD/PCCB family. In terms of assembly, acetyl-CoA carboxylase is a heterohexamer composed of biotin carboxyl carrier protein (AccB), biotin carboxylase (AccC) and two subunits each of ACCase subunit alpha (AccA) and ACCase subunit beta (AccD). Zn(2+) serves as cofactor.

Its subcellular location is the cytoplasm. It catalyses the reaction N(6)-carboxybiotinyl-L-lysyl-[protein] + acetyl-CoA = N(6)-biotinyl-L-lysyl-[protein] + malonyl-CoA. It participates in lipid metabolism; malonyl-CoA biosynthesis; malonyl-CoA from acetyl-CoA: step 1/1. Its function is as follows. Component of the acetyl coenzyme A carboxylase (ACC) complex. Biotin carboxylase (BC) catalyzes the carboxylation of biotin on its carrier protein (BCCP) and then the CO(2) group is transferred by the transcarboxylase to acetyl-CoA to form malonyl-CoA. This Lysinibacillus sphaericus (strain C3-41) protein is Acetyl-coenzyme A carboxylase carboxyl transferase subunit beta 1.